Reading from the N-terminus, the 240-residue chain is uncharacterized protein (240 aa).

Transmembrane regions (helical) follow at residues 12–32 (ICIH…ILMS), 66–86 (IQVL…FVLV), and 89–109 (ISGY…IYFF). N-linked (GlcNAc...) asparagine; by host glycosylation is found at Asn129 and Asn157.

The protein localises to the membrane. This is an uncharacterized protein from Acanthamoeba polyphaga mimivirus (APMV).